Consider the following 283-residue polypeptide: Lipoyl synthase (283 aa).

The [4Fe-4S] cluster site is built by Cys35, Cys40, Cys46, Cys61, Cys65, Cys68, and Ser273. Residues 47-262 (FRERQATFLI…RAAALATGFA (216 aa)) enclose the Radical SAM core domain.

The protein belongs to the radical SAM superfamily. Lipoyl synthase family. Requires [4Fe-4S] cluster as cofactor.

The protein localises to the cytoplasm. The catalysed reaction is [[Fe-S] cluster scaffold protein carrying a second [4Fe-4S](2+) cluster] + N(6)-octanoyl-L-lysyl-[protein] + 2 oxidized [2Fe-2S]-[ferredoxin] + 2 S-adenosyl-L-methionine + 4 H(+) = [[Fe-S] cluster scaffold protein] + N(6)-[(R)-dihydrolipoyl]-L-lysyl-[protein] + 4 Fe(3+) + 2 hydrogen sulfide + 2 5'-deoxyadenosine + 2 L-methionine + 2 reduced [2Fe-2S]-[ferredoxin]. The protein operates within protein modification; protein lipoylation via endogenous pathway; protein N(6)-(lipoyl)lysine from octanoyl-[acyl-carrier-protein]: step 2/2. Functionally, catalyzes the radical-mediated insertion of two sulfur atoms into the C-6 and C-8 positions of the octanoyl moiety bound to the lipoyl domains of lipoate-dependent enzymes, thereby converting the octanoylated domains into lipoylated derivatives. The protein is Lipoyl synthase of Geobacter metallireducens (strain ATCC 53774 / DSM 7210 / GS-15).